We begin with the raw amino-acid sequence, 261 residues long: RING-H2 finger protein ATL58 (261 aa).

The helical transmembrane segment at 25 to 45 (AFIFSVPICFTFIILFLFYLI) threads the bilayer. Residues 100-142 (CSVCLGDYQPNDKLQQIPVCKHTFHMDCIDLWLTSHTTCPLCR) form an RING-type; atypical zinc finger. Disordered regions lie at residues 149-227 (RSRQ…NDGH) and 241-261 (MEED…CRTG). A compositionally biased stretch (polar residues) spans 194–221 (SGVSSQPESQPVVNHRGVSSQPESQPVN).

It belongs to the RING-type zinc finger family. ATL subfamily.

It is found in the membrane. The catalysed reaction is S-ubiquitinyl-[E2 ubiquitin-conjugating enzyme]-L-cysteine + [acceptor protein]-L-lysine = [E2 ubiquitin-conjugating enzyme]-L-cysteine + N(6)-ubiquitinyl-[acceptor protein]-L-lysine.. It functions in the pathway protein modification; protein ubiquitination. The protein is RING-H2 finger protein ATL58 (ATL58) of Arabidopsis thaliana (Mouse-ear cress).